A 193-amino-acid polypeptide reads, in one-letter code: MRLCDRDIEAWLDEGRLSINPRPPVERINGATVDVRLGNKFRTFRGHTAAFIDLSGPKDEVSAALDRVMSDEIVLDEGDAFYLHPGELALAVTFESVTLPPDLVGWLDGRSSLARLGLMVHVTAHRIDPGWSGCIVLEFYNSGKLPLALRPGMLIGALSFEPLSGPAARPYNRRQDAKYRDQQGAVASRIDKD.

Residues 110–115, D128, 136–138, Y171, K178, and Q182 each bind dCTP; these read RSSLAR and VLE. The active-site Proton donor/acceptor is E138. The interval 169–193 is disordered; sequence RPYNRRQDAKYRDQQGAVASRIDKD.

Belongs to the dCTP deaminase family. Homotrimer.

The catalysed reaction is dCTP + H2O + H(+) = dUTP + NH4(+). The protein operates within pyrimidine metabolism; dUMP biosynthesis; dUMP from dCTP (dUTP route): step 1/2. In terms of biological role, catalyzes the deamination of dCTP to dUTP. The sequence is that of dCTP deaminase from Citrobacter koseri (strain ATCC BAA-895 / CDC 4225-83 / SGSC4696).